The following is a 249-amino-acid chain: Coproheme decarboxylase (249 aa).

Residues arginine 131, 145-149 (YPMDK), histidine 172, glutamine 185, and serine 223 contribute to the Fe-coproporphyrin III site. Tyrosine 145 is an active-site residue.

It belongs to the ChdC family. Type 1 subfamily. Fe-coproporphyrin III serves as cofactor.

It carries out the reaction Fe-coproporphyrin III + 2 H2O2 + 2 H(+) = heme b + 2 CO2 + 4 H2O. It catalyses the reaction Fe-coproporphyrin III + H2O2 + H(+) = harderoheme III + CO2 + 2 H2O. The enzyme catalyses harderoheme III + H2O2 + H(+) = heme b + CO2 + 2 H2O. It functions in the pathway porphyrin-containing compound metabolism; protoheme biosynthesis. Involved in coproporphyrin-dependent heme b biosynthesis. Catalyzes the decarboxylation of Fe-coproporphyrin III (coproheme) to heme b (protoheme IX), the last step of the pathway. The reaction occurs in a stepwise manner with a three-propionate intermediate. This is Coproheme decarboxylase from Shouchella clausii (strain KSM-K16) (Alkalihalobacillus clausii).